A 71-amino-acid polypeptide reads, in one-letter code: Protein SlyX homolog (71 aa).

Belongs to the SlyX family.

In Azotobacter vinelandii (strain DJ / ATCC BAA-1303), this protein is Protein SlyX homolog.